The chain runs to 230 residues: Ribosomal RNA small subunit methyltransferase G (230 aa).

S-adenosyl-L-methionine-binding positions include Gly80, Phe85, 131-132 (VE), and Arg145.

Belongs to the methyltransferase superfamily. RNA methyltransferase RsmG family.

The protein resides in the cytoplasm. It catalyses the reaction guanosine(527) in 16S rRNA + S-adenosyl-L-methionine = N(7)-methylguanosine(527) in 16S rRNA + S-adenosyl-L-homocysteine. Functionally, specifically methylates the N7 position of guanine in position 527 of 16S rRNA. The protein is Ribosomal RNA small subunit methyltransferase G of Novosphingobium aromaticivorans (strain ATCC 700278 / DSM 12444 / CCUG 56034 / CIP 105152 / NBRC 16084 / F199).